Consider the following 1993-residue polypeptide: [F-actin]-monooxygenase MICAL3 (1993 aa).

Positions 2-494 (EERKQETTNQ…RHLYDSGETK (493 aa)) are monooxygenase domain. Residues C97, 116-118 (EKR), 123-125 (RNN), F183, Y298, and D398 contribute to the FAD site. The Calponin-homology (CH) domain maps to 518–624 (VARSSKLLGW…YLTQFYEMFK (107 aa)). S649 is subject to Phosphoserine. Positions 658–704 (GQTISRKRSPKDKKEKDSDGAGKRRKTSQSEEEEPPRSYKGERPTLV) are disordered. The span at 669 to 679 (DKKEKDSDGAG) shows a compositional bias: basic and acidic residues. S685 and S687 each carry phosphoserine. An LIM zinc-binding domain is found at 762–824 (DTCYFCQKRV…KPHYCYRLSG (63 aa)). 8 residues coordinate Zn(2+): C764, C767, H785, C788, C791, C794, C814, and H817. The interval 854–886 (NGLASVAASSAERSPGTSMNGLEEPSIAKRLRG) is disordered. Residues 860-873 (AASSAERSPGTSMN) show a composition bias toward polar residues. T887 carries the post-translational modification Phosphothreonine. Disordered regions lie at residues 905–1023 (ELEE…RLQQ), 1039–1309 (WTHI…LSGP), 1332–1546 (IRRS…FFTP), and 1559–1837 (KENG…EELK). Residues 938–951 (SEMEEEEEEDDEDD) are compositionally biased toward acidic residues. The segment covering 975–988 (GRSEEELEASKNFE) has biased composition (basic and acidic residues). Position 977 is a phosphoserine (S977). The segment covering 989–1014 (PEEEEEEEEYEEEDEEYEEEEEEESS) has biased composition (acidic residues). The segment covering 1039–1051 (WTHIREREAEERM) has biased composition (basic and acidic residues). Acidic residues predominate over residues 1065 to 1090 (DEDDLEEDADSEPAETEGEAAEDGDP). The segment covering 1111 to 1148 (EAEHRLQSQAKVKAELELRVSENEEEKPSDAPKQEERG) has biased composition (basic and acidic residues). Residues S1131 and S1187 each carry the phosphoserine modification. Positions 1199–1212 (LREKPKAEVPEEQK) are enriched in basic and acidic residues. Positions 1230-1239 (SPTSPTSLQP) are enriched in polar residues. The segment covering 1245-1255 (PPTPPTPPPTQ) has biased composition (pro residues). Residues 1257 to 1275 (PICSQPQPSSDASIPSPTK) are compositionally biased toward polar residues. S1272 carries the post-translational modification Phosphoserine. T1274 bears the Phosphothreonine mark. Phosphoserine occurs at positions 1276 and 1335. T1339 carries the post-translational modification Phosphothreonine. 2 positions are modified to phosphoserine: S1369 and S1382. A compositionally biased stretch (basic and acidic residues) spans 1405–1420 (PSDKELRSSQEERRDL). A compositionally biased stretch (low complexity) spans 1421–1433 (SSSSGLGLHDSSS). Phosphoserine is present on S1431. A compositionally biased stretch (polar residues) spans 1434–1452 (NMKTLGSQSFNTSDSTMLT). Phosphothreonine is present on T1452. A compositionally biased stretch (pro residues) spans 1454–1465 (PSSPPPPPPPNE). Residues 1516 to 1530 (SVDEIPFADDVEDTY) are compositionally biased toward acidic residues. Positions 1584–1600 (EAKELAEERMRAREKSV) are enriched in basic and acidic residues. The span at 1623 to 1633 (SSRSHTAQSQG) shows a compositional bias: polar residues. Position 1640 is a phosphoserine (S1640). The span at 1665-1685 (SPPSDSGGPDGSVTSSEGSSG) shows a compositional bias: low complexity. Residues 1686-1704 (KSKKRSSLFSPRRNKKEKK) show a composition bias toward basic residues. Phosphoserine occurs at positions 1692 and 1695. Over residues 1754–1763 (TPSSGATVDS) the composition is skewed to polar residues. Positions 1795-1811 (ILERSSQKSKREPRTYT) are enriched in basic and acidic residues. Positions 1817–1983 (AKLTRRVQKA…EEDKDLEAAM (167 aa)) form a coiled coil. The span at 1819–1830 (LTRRVQKAARRQ) shows a compositional bias: basic residues. In terms of domain architecture, bMERB spans 1832–1981 (KQEELKRLHR…EKEEDKDLEA (150 aa)). S1903 is modified (phosphoserine).

This sequence belongs to the Mical family. As to quaternary structure, interacts with RAB1B, RAB8A, RAB10, RAB13 and RAB15 (in their GTP-bound forms); binding to RAB1B is of low affinity compared to other Rab proteins; at least in case of RAB8A can bind 2 molecules of RAB8A simultaneously through a high and a low affinity binding site, respectively. Interacts with ERC1 and RAB8A; may bridge ERC1 with RAB8A. Interacts with KIF23 and ERC1; enhances the interaction between KIF23 and ERC1. Interacts with NINL. It depends on FAD as a cofactor.

It localises to the cytoplasm. Its subcellular location is the cell cortex. It is found in the cytoskeleton. The protein localises to the nucleus. The protein resides in the midbody. It localises to the spindle. Its subcellular location is the cilium basal body. The enzyme catalyses L-methionyl-[F-actin] + NADPH + O2 + H(+) = L-methionyl-(R)-S-oxide-[F-actin] + NADP(+) + H2O. In terms of biological role, monooxygenase that promotes depolymerization of F-actin by mediating oxidation of specific methionine residues on actin to form methionine-sulfoxide, resulting in actin filament disassembly and preventing repolymerization. In the absence of actin, it also functions as a NADPH oxidase producing H(2)O(2). Seems to act as Rab effector protein and play a role in vesicle trafficking. Involved in exocytic vesicles tethering and fusion: the monooxygenase activity is required for this process and implicates RAB8A associated with exocytotic vesicles. Required for cytokinesis. Contributes to stabilization and/or maturation of the intercellular bridge independently of its monooxygenase activity. Promotes recruitment of Rab8 and ERC1 to the intercellular bridge, and together these proteins are proposed to function in timely abscission. This chain is [F-actin]-monooxygenase MICAL3 (Mical3), found in Mus musculus (Mouse).